A 229-amino-acid chain; its full sequence is Ribosomal RNA small subunit methyltransferase G (229 aa).

S-adenosyl-L-methionine is bound by residues Gly-71, 122–123, and Arg-139; that span reads AE.

This sequence belongs to the methyltransferase superfamily. RNA methyltransferase RsmG family.

Its subcellular location is the cytoplasm. In terms of biological role, specifically methylates the N7 position of a guanine in 16S rRNA. This Thermotoga neapolitana (strain ATCC 49049 / DSM 4359 / NBRC 107923 / NS-E) protein is Ribosomal RNA small subunit methyltransferase G.